The following is a 286-amino-acid chain: ATP synthase gamma chain (286 aa).

It belongs to the ATPase gamma chain family. As to quaternary structure, F-type ATPases have 2 components, CF(1) - the catalytic core - and CF(0) - the membrane proton channel. CF(1) has five subunits: alpha(3), beta(3), gamma(1), delta(1), epsilon(1). CF(0) has three main subunits: a, b and c.

The protein localises to the cell membrane. Its function is as follows. Produces ATP from ADP in the presence of a proton gradient across the membrane. The gamma chain is believed to be important in regulating ATPase activity and the flow of protons through the CF(0) complex. The chain is ATP synthase gamma chain from Bacillus mycoides (strain KBAB4) (Bacillus weihenstephanensis).